Here is a 166-residue protein sequence, read N- to C-terminus: MASTQVVFIVTLFLYLLITRWRRKNEKSFIASEEPKQPEWRDYTPAELKEYNGSKNSLVFLAIKGTVYNVTMGSKFYGPQGPYSAFAGHDASRGLAKNSFDDEFIPDSDAEELDDCSDLNDEERQALNDWKAFFDQKYQAVGRLISPREARAAATISETEEKVAHN.

The chain crosses the membrane as a helical span at residues 4-21 (TQVVFIVTLFLYLLITRW). The 104-residue stretch at 42–145 (DYTPAELKEY…QKYQAVGRLI (104 aa)) folds into the Cytochrome b5 heme-binding domain. Phosphoserine is present on Ser108. Heme is bound at residue Tyr138.

Belongs to the cytochrome b5 family. MAPR subfamily. In terms of assembly, interacts with erg5 and erg11.

It is found in the endoplasmic reticulum. It localises to the membrane. In terms of biological role, required for sterol biosynthesis. Functions as a positive regulator of cytochrome P450 enzymes erg5 and erg11. Function requires bound heme. The protein is Cytochrome P450 regulator dap1 (dap1) of Schizosaccharomyces pombe (strain 972 / ATCC 24843) (Fission yeast).